The sequence spans 243 residues: MNATAIIAASGVGKRMNLGGGRSKQMLEIGGFPVIHHTIKAFQEAASIKAICIATKAEHVETLRTMAREAGFTKVTTVIEGGEERQDSVGNCIRSIRDEAAAGKEMPEAILVHDGARPFIQPDEIDAIAALSLEYGASVPANRPKDTIKCIGTTPGFFGETLDRATLLQVQTPQGFKADILIKAHEQAAKEGRYATDDAALVERYFPANPIRIYETGYHNIKITTPEDLPMAEAIYSSLSKKR.

This sequence belongs to the IspD/TarI cytidylyltransferase family. IspD subfamily.

The enzyme catalyses 2-C-methyl-D-erythritol 4-phosphate + CTP + H(+) = 4-CDP-2-C-methyl-D-erythritol + diphosphate. It functions in the pathway isoprenoid biosynthesis; isopentenyl diphosphate biosynthesis via DXP pathway; isopentenyl diphosphate from 1-deoxy-D-xylulose 5-phosphate: step 2/6. Catalyzes the formation of 4-diphosphocytidyl-2-C-methyl-D-erythritol from CTP and 2-C-methyl-D-erythritol 4-phosphate (MEP). This Chlorobium phaeovibrioides (strain DSM 265 / 1930) (Prosthecochloris vibrioformis (strain DSM 265)) protein is 2-C-methyl-D-erythritol 4-phosphate cytidylyltransferase.